The sequence spans 508 residues: Photosystem II CP47 reaction center protein (508 aa).

6 helical membrane passes run 21–36 (SVHI…WAGS), 101–115 (IVFS…IWHW), 140–156 (GIHL…FGAF), 203–218 (IAAG…FHLS), 237–252 (VLSS…AFVV), and 457–472 (TFAL…HGAR).

This sequence belongs to the PsbB/PsbC family. PsbB subfamily. As to quaternary structure, PSII is composed of 1 copy each of membrane proteins PsbA, PsbB, PsbC, PsbD, PsbE, PsbF, PsbH, PsbI, PsbJ, PsbK, PsbL, PsbM, PsbT, PsbX, PsbY, PsbZ, Psb30/Ycf12, at least 3 peripheral proteins of the oxygen-evolving complex and a large number of cofactors. It forms dimeric complexes. It depends on Binds multiple chlorophylls. PSII binds additional chlorophylls, carotenoids and specific lipids. as a cofactor.

The protein localises to the plastid. It localises to the chloroplast thylakoid membrane. Functionally, one of the components of the core complex of photosystem II (PSII). It binds chlorophyll and helps catalyze the primary light-induced photochemical processes of PSII. PSII is a light-driven water:plastoquinone oxidoreductase, using light energy to abstract electrons from H(2)O, generating O(2) and a proton gradient subsequently used for ATP formation. The sequence is that of Photosystem II CP47 reaction center protein from Oryza sativa subsp. indica (Rice).